The following is a 345-amino-acid chain: Protein RecA (345 aa).

Residue 66–73 coordinates ATP; sequence GPESSGKT.

This sequence belongs to the RecA family.

Its subcellular location is the cytoplasm. Functionally, can catalyze the hydrolysis of ATP in the presence of single-stranded DNA, the ATP-dependent uptake of single-stranded DNA by duplex DNA, and the ATP-dependent hybridization of homologous single-stranded DNAs. It interacts with LexA causing its activation and leading to its autocatalytic cleavage. The sequence is that of Protein RecA from Helicobacter hepaticus (strain ATCC 51449 / 3B1).